The chain runs to 103 residues: Pyrimidine/purine nucleoside phosphorylase (103 aa).

Belongs to the nucleoside phosphorylase PpnP family.

The catalysed reaction is a purine D-ribonucleoside + phosphate = a purine nucleobase + alpha-D-ribose 1-phosphate. The enzyme catalyses adenosine + phosphate = alpha-D-ribose 1-phosphate + adenine. It catalyses the reaction cytidine + phosphate = cytosine + alpha-D-ribose 1-phosphate. It carries out the reaction guanosine + phosphate = alpha-D-ribose 1-phosphate + guanine. The catalysed reaction is inosine + phosphate = alpha-D-ribose 1-phosphate + hypoxanthine. The enzyme catalyses thymidine + phosphate = 2-deoxy-alpha-D-ribose 1-phosphate + thymine. It catalyses the reaction uridine + phosphate = alpha-D-ribose 1-phosphate + uracil. It carries out the reaction xanthosine + phosphate = alpha-D-ribose 1-phosphate + xanthine. Functionally, catalyzes the phosphorolysis of diverse nucleosides, yielding D-ribose 1-phosphate and the respective free bases. Can use uridine, adenosine, guanosine, cytidine, thymidine, inosine and xanthosine as substrates. Also catalyzes the reverse reactions. This is Pyrimidine/purine nucleoside phosphorylase from Shewanella denitrificans (strain OS217 / ATCC BAA-1090 / DSM 15013).